Consider the following 133-residue polypeptide: 14 kDa fatty acid-binding protein (133 aa).

Residues arginine 107 and 127 to 129 (RNY) each bind (5Z,8Z,11Z,14Z)-eicosatetraenoate. Residues arginine 107 and 127–129 (RNY) contribute to the (9Z)-octadecenoate site.

It belongs to the calycin superfamily. Fatty-acid binding protein (FABP) family. As to expression, tubercles, muscle layers and body.

The protein localises to the cytoplasm. Its function is as follows. May play a role in the transport of fatty acids. Binds various fatty acids, such as arachidonic, oleic, palmitic and linolenic acid (in vitro). The sequence is that of 14 kDa fatty acid-binding protein from Schistosoma mansoni (Blood fluke).